The primary structure comprises 599 residues: Sulfite reductase [NADPH] flavoprotein alpha-component (599 aa).

One can recognise a Flavodoxin-like domain in the interval 64–202 (ITLISASQTG…AAAEWRARVV (139 aa)). Residues 70-75 (SQTGNA), 117-120 (STQG), and 153-162 (LGDTSYEFFC) contribute to the FMN site. Residues 234–448 (EAPLTATLSV…IEHNDNFRLP (215 aa)) enclose the FAD-binding FR-type domain. Residues T322, A356, 386–389 (RLYS), 404–406 (TVG), Y410, and 419–422 (GGAS) contribute to the FAD site. Residues 519–520 (SR), 525–529 (KIYVQ), and D561 each bind NADP(+). FAD is bound at residue Y599.

It belongs to the NADPH-dependent sulphite reductase flavoprotein subunit CysJ family. The protein in the N-terminal section; belongs to the flavodoxin family. This sequence in the C-terminal section; belongs to the flavoprotein pyridine nucleotide cytochrome reductase family. As to quaternary structure, alpha(8)-beta(8). The alpha component is a flavoprotein, the beta component is a hemoprotein. FAD is required as a cofactor. The cofactor is FMN.

The enzyme catalyses hydrogen sulfide + 3 NADP(+) + 3 H2O = sulfite + 3 NADPH + 4 H(+). It functions in the pathway sulfur metabolism; hydrogen sulfide biosynthesis; hydrogen sulfide from sulfite (NADPH route): step 1/1. Functionally, component of the sulfite reductase complex that catalyzes the 6-electron reduction of sulfite to sulfide. This is one of several activities required for the biosynthesis of L-cysteine from sulfate. The flavoprotein component catalyzes the electron flow from NADPH -&gt; FAD -&gt; FMN to the hemoprotein component. This is Sulfite reductase [NADPH] flavoprotein alpha-component from Klebsiella pneumoniae subsp. pneumoniae (strain ATCC 700721 / MGH 78578).